Consider the following 420-residue polypeptide: Protein ECERIFERUM 26-like (420 aa).

It belongs to the plant acyltransferase family. In terms of tissue distribution, highly expressed in flowers. Expressed in leaves.

In terms of biological role, involved in biosynthesis of the epicuticular wax. Plays a role in very-long-chain fatty acid (VLCFA) biosynthesis and is required for VLCFA elongation in leaf. Despite its classification as a BAHD acyltransferase based on sequence homology, CER26L does not seem to share the catalytic mechanism of the members of the BAHD family. The chain is Protein ECERIFERUM 26-like (CER26L) from Arabidopsis thaliana (Mouse-ear cress).